Consider the following 81-residue polypeptide: UPF0729 protein C18orf32 homolog (81 aa).

Positions 45 to 58 are enriched in polar residues; the sequence is AASDQKVSEKSNGT. A disordered region spans residues 45–81; that stretch reads AASDQKVSEKSNGTCKPESNGEATANGSTIAADKKTD.

It belongs to the UPF0729 family.

This is UPF0729 protein C18orf32 homolog from Anoplopoma fimbria (Sablefish).